Here is a 224-residue protein sequence, read N- to C-terminus: Response regulator protein GraR (224 aa).

The region spanning 2 to 115 is the Response regulatory domain; it reads QILLVEDDNT…VLIAKLQAIY (114 aa). The residue at position 51 (aspartate 51) is a 4-aspartylphosphate. The ompR/PhoB-type DNA-binding region spans 126–224; the sequence is KRTLTWQDAV…KVGKGYMAHE (99 aa). 3 positions are modified to phosphothreonine: threonine 128, threonine 130, and threonine 149.

As to quaternary structure, interacts with GraX. In terms of processing, phosphorylated by GraS. Phosphorylated by Stk1; phosphorylation increases the DNA-binding activity of GraR.

It localises to the cytoplasm. Member of the two-component regulatory system GraR/GraS involved in resistance against cationic antimicrobial peptides (CAMPs). Upon phosphorylation by GraS, functions as a transcription regulator by direct binding to promoter regions of target genes such as adhesins, exoproteins, transporters, toxins, and proteins involved in cell wall synthesis. Down-regulates the expression of many genes involved in RNA and amino acid synthesis or glycolysis. This chain is Response regulator protein GraR (graR), found in Staphylococcus aureus (strain Mu50 / ATCC 700699).